Here is a 428-residue protein sequence, read N- to C-terminus: Sulfite exporter TauE/SafE family protein 6 (428 aa).

The next 11 helical transmembrane spans lie at 1–21, 61–81, 82–102, 105–125, 128–148, 149–169, 245–265, 294–314, 332–352, 356–376, and 388–408; these read MKTL…NANQ, ALVV…ASGI, GDGF…LKAA, FSAF…HFGC, LIDY…VSVG, VICN…VFLM, YWIL…LALS, VMSF…GMII, TSFM…LLGM, EAAY…LVFA, and IIVF…ASFG.

Belongs to the 4-toluene sulfonate uptake permease (TSUP) (TC 2.A.102) family.

The protein localises to the membrane. In Arabidopsis thaliana (Mouse-ear cress), this protein is Sulfite exporter TauE/SafE family protein 6.